The sequence spans 479 residues: Cyclin-dependent kinase F-1 (479 aa).

A Protein kinase domain is found at 21-418 (YEIFERVGSG…TMEMLNDKYL (398 aa)). ATP contacts are provided by residues 27–35 (VGSGAYADV) and lysine 50. Tyrosine 32 is subject to Phosphotyrosine. The active-site Proton acceptor is aspartate 146. A phosphoserine mark is found at serine 179, serine 208, and serine 247. The interval 187–221 (KLEDKDGETSEPPEVIPDYENSPRQGSDGQEREAM) is disordered. Residue threonine 290 is modified to Phosphothreonine. A disordered region spans residues 434 to 479 (PTMSGPDEDSPRKWNDYREMDSDSDFDGFGPMNVKPTSSGFTIEFP). The span at 442-454 (DSPRKWNDYREMD) shows a compositional bias: basic and acidic residues. Positions 468–479 (KPTSSGFTIEFP) are enriched in polar residues.

The protein belongs to the protein kinase superfamily. CMGC Ser/Thr protein kinase family. CDC2/CDKX subfamily. As to expression, highly expressed in suspension cell culture. Expressed at low levels in all plant organs.

The enzyme catalyses L-seryl-[protein] + ATP = O-phospho-L-seryl-[protein] + ADP + H(+). The catalysed reaction is L-threonyl-[protein] + ATP = O-phospho-L-threonyl-[protein] + ADP + H(+). It catalyses the reaction [DNA-directed RNA polymerase] + ATP = phospho-[DNA-directed RNA polymerase] + ADP + H(+). Functionally, CDK-activating kinase that modulates CDKD-2 and CDKD-3 activities by phosphorylation of the T-loop. Activates CDKD-2 C-terminal domain (CTD) kinase activity. Activates CDKA-1 probably by phosphorylation. Possesses a CDK kinase activity independently of association with cyclin CYCH1-1. Phosphorylates the CTD of the large subunit of RNA polymerase II. This Arabidopsis thaliana (Mouse-ear cress) protein is Cyclin-dependent kinase F-1 (CDKF-1).